A 262-amino-acid chain; its full sequence is UPF0619 GPI-anchored membrane protein C1322.10 (262 aa).

The N-terminal stretch at 1 to 20 (MLARVGTTLFFLANALAAYA) is a signal peptide. Disordered regions lie at residues 136-165 (STSA…SSST) and 175-194 (ISSS…SGSI). Residues Asn207 and Asn227 are each glycosylated (N-linked (GlcNAc...) asparagine). Asn242 carries the GPI-like-anchor amidated asparagine lipid modification. The propeptide at 243–262 (GVAQLSVAACMGIAALMLIA) is removed in mature form.

It belongs to the UPF0619 family.

It is found in the golgi apparatus membrane. The protein resides in the cell membrane. The protein is UPF0619 GPI-anchored membrane protein C1322.10 of Schizosaccharomyces pombe (strain 972 / ATCC 24843) (Fission yeast).